The sequence spans 209 residues: NFKLVIVGDGGTGKTTFVKRHLTGEFEKKYEPTIGVEVHPLDFFTNCGKIRFYCWDTAGQEKFGGLRDGYYIHGQCAIIMFDVTARLTYKNVPTWHRDLCRVCENIPIVLCGNKVDVKNRQVKAKQVTFHRKKNLQYYEISAKSNYNFEKPFLYLARKLAGDPNLHFVESPALAPPEVQIDLAAQQQHEAELAQAASQPLPDDDDDAFD.

The region spanning 1 to 162 (NFKLVIVGDG…LYLARKLAGD (162 aa)) is the Small GTPase Ran-type domain. Position 9-16 (9-16 (DGGTGKTT)) interacts with GTP. Residues 28-36 (KKYEPTIGV) are switch-I. Residues glycine 59, 113 to 116 (NKVD), and 141 to 143 (SAK) each bind GTP. The switch-II stretch occupies residues 59-75 (GQEKFGGLRDGYYIHGQ). Over residues 187–196 (QHEAELAQAA) the composition is skewed to low complexity. Positions 187–209 (QHEAELAQAASQPLPDDDDDAFD) are disordered.

It belongs to the small GTPase superfamily. Ran family. Found in a nuclear export complex with RanGTP, exportin and pre-miRNA.

Its subcellular location is the nucleus. In terms of biological role, GTP-binding protein involved in nucleocytoplasmic transport. Required for the import of protein into the nucleus and also for RNA export. Involved in chromatin condensation and control of cell cycle. In Lotus japonicus (Lotus corniculatus var. japonicus), this protein is GTP-binding nuclear protein Ran1A (RAN1A).